Consider the following 132-residue polypeptide: Small ribosomal subunit protein uS11 (132 aa).

Belongs to the universal ribosomal protein uS11 family. As to quaternary structure, part of the 30S ribosomal subunit. Interacts with proteins S7 and S18. Binds to IF-3.

Its function is as follows. Located on the platform of the 30S subunit, it bridges several disparate RNA helices of the 16S rRNA. Forms part of the Shine-Dalgarno cleft in the 70S ribosome. The polypeptide is Small ribosomal subunit protein uS11 (Chlamydia abortus (strain DSM 27085 / S26/3) (Chlamydophila abortus)).